Here is a 232-residue protein sequence, read N- to C-terminus: MPSQQKKIIFCMAGVLSFLCALGVVTAVGTPLWVKATILCKTGALLVNASGKELDKFMGEMQYGLFHGEGVRQCGLGARPFRFSFFPDLVQAIPVSIHINIILFSMILVVLTMVGTAFFMYNAFGKPFETLHGPLGLYLVSFISGSCGCLVMILFASEVKVHRLSEKIANFKEGTYAYRTQNENYTTSFWVVFICFFVHFLNGLLIRLAGFQFPFTKSKETETTNVASDLMY.

The chain crosses the membrane as a helical span at residues 8-28 (IIFCMAGVLSFLCALGVVTAV). N-linked (GlcNAc...) asparagine glycosylation occurs at Asn48. Helical transmembrane passes span 101–121 (IILF…FFMY) and 135–155 (LGLY…MILF). A glycan (N-linked (GlcNAc...) asparagine) is linked at Asn184. Residues 186 to 206 (TTSFWVVFICFFVHFLNGLLI) traverse the membrane as a helical segment.

This sequence belongs to the clarin family.

The protein resides in the cell membrane. In terms of biological role, may have a role in the excitatory ribbon synapse junctions between hair cells and cochlear ganglion cells and presumably also in analogous synapses within the retina. This Mus musculus (Mouse) protein is Clarin-1 (Clrn1).